A 163-amino-acid polypeptide reads, in one-letter code: Pheromone-binding protein (163 aa).

Residues 1 to 21 (MLRKISLLLLPVFVAINLVHS) form the signal peptide. 3 cysteine pairs are disulfide-bonded: C40-C75, C71-C129, and C118-C138.

The protein belongs to the PBP/GOBP family. In terms of assembly, homodimer. Antenna.

Functionally, this major soluble protein in olfactory sensilla of male moths might serve to solubilize the extremely hydrophobic pheromone molecules and to transport pheromone through the aqueous lymph to receptors located on olfactory cilia. In Antheraea polyphemus (Polyphemus moth), this protein is Pheromone-binding protein.